The primary structure comprises 299 residues: Transcription elongation factor A protein 2 (299 aa).

Residues 5 to 82 (EEIARIARRL…KSWKKLLDVS (78 aa)) form the TFIIS N-terminal domain. Lys-57 participates in a covalent cross-link: Glycyl lysine isopeptide (Lys-Gly) (interchain with G-Cter in ubiquitin). Residues Ser-59 and Ser-100 each carry the phosphoserine modification. Residues 82-127 (SDGKSRNQGRGTPLPTSSSKDASRTTDLSCKKPDPPRTPSTPRITT) form a disordered region. Positions 87–101 (RNQGRGTPLPTSSSK) are enriched in polar residues. Positions 102 to 116 (DASRTTDLSCKKPDP) are enriched in basic and acidic residues. A TFIIS central domain is found at 138–254 (VRNKCREMLT…EHQMARTGGT (117 aa)). Residues 257-297 (DLFTCNKCRKKNCTYTQVQTRSSDEPMTTYVVCNECGNRWK) form a TFIIS-type zinc finger. Cys-261, Cys-264, Cys-289, and Cys-292 together coordinate Zn(2+).

Belongs to the TFS-II family. Interacts with the basal transcription factor GTF2B. Interacts with REXO1. Testis and ovary specific. Specific to testicular germ cells.

The protein resides in the nucleus. Its function is as follows. Necessary for efficient RNA polymerase II transcription elongation past template-encoded arresting sites. The arresting sites in DNA have the property of trapping a certain fraction of elongating RNA polymerases that pass through, resulting in locked ternary complexes. Cleavage of the nascent transcript by S-II allows the resumption of elongation from the new 3'-terminus. The protein is Transcription elongation factor A protein 2 (Tcea2) of Mus musculus (Mouse).